The primary structure comprises 358 residues: Type II methyltransferase M.HpaII (358 aa).

Positions 32–356 (FTFIDLFAGI…KKILEKLGNL (325 aa)) constitute an SAM-dependent MTase C5-type domain. Cys103 is a catalytic residue.

This sequence belongs to the class I-like SAM-binding methyltransferase superfamily. C5-methyltransferase family. Monomer.

It catalyses the reaction a 2'-deoxycytidine in DNA + S-adenosyl-L-methionine = a 5-methyl-2'-deoxycytidine in DNA + S-adenosyl-L-homocysteine + H(+). Its function is as follows. A methylase that recognizes the double-stranded sequence 5'-CCGG-3', methylates C-2 on both strands, and protects the DNA from cleavage by the HpaII endonuclease. In Haemophilus parainfluenzae, this protein is Type II methyltransferase M.HpaII.